A 387-amino-acid chain; its full sequence is Alkanesulfonate monooxygenase (387 aa).

This sequence belongs to the SsuD family.

It carries out the reaction an alkanesulfonate + FMNH2 + O2 = an aldehyde + FMN + sulfite + H2O + 2 H(+). Functionally, catalyzes the desulfonation of aliphatic sulfonates. This chain is Alkanesulfonate monooxygenase, found in Xanthomonas axonopodis pv. citri (strain 306).